A 123-amino-acid polypeptide reads, in one-letter code: MARIAGVDLPKNKRLDIALTYIYGVGRTTALKILDTVGIDWTLKTDDLSGEQVNTIRKELEDNYKVEGDLRRDQIADIKRLMDIGCYRGLRHRRGLPVRGQSSKTNARTRKGPRRSVMSRKKK.

The disordered stretch occupies residues 95–123 (GLPVRGQSSKTNARTRKGPRRSVMSRKKK). Residues 107 to 123 (ARTRKGPRRSVMSRKKK) are compositionally biased toward basic residues.

It belongs to the universal ribosomal protein uS13 family. As to quaternary structure, part of the 30S ribosomal subunit. Forms a loose heterodimer with protein S19. Forms two bridges to the 50S subunit in the 70S ribosome.

In terms of biological role, located at the top of the head of the 30S subunit, it contacts several helices of the 16S rRNA. In the 70S ribosome it contacts the 23S rRNA (bridge B1a) and protein L5 of the 50S subunit (bridge B1b), connecting the 2 subunits; these bridges are implicated in subunit movement. Contacts the tRNAs in the A and P-sites. This Maridesulfovibrio salexigens (strain ATCC 14822 / DSM 2638 / NCIMB 8403 / VKM B-1763) (Desulfovibrio salexigens) protein is Small ribosomal subunit protein uS13.